Here is a 96-residue protein sequence, read N- to C-terminus: Co-chaperonin GroES (96 aa).

The protein belongs to the GroES chaperonin family. As to quaternary structure, heptamer of 7 subunits arranged in a ring. Interacts with the chaperonin GroEL.

It localises to the cytoplasm. Together with the chaperonin GroEL, plays an essential role in assisting protein folding. The GroEL-GroES system forms a nano-cage that allows encapsulation of the non-native substrate proteins and provides a physical environment optimized to promote and accelerate protein folding. GroES binds to the apical surface of the GroEL ring, thereby capping the opening of the GroEL channel. The protein is Co-chaperonin GroES of Shewanella baltica (strain OS223).